The sequence spans 67 residues: MKFAPMDKVKFKTASHLNKLRTLKKRVPELDDPLLGECWEFEEDGLRQFDWEENYEFVARPKHFNWD.

This is SPbeta prophage-derived uncharacterized protein YoqF (yoqF) from Bacillus subtilis (strain 168).